The chain runs to 143 residues: Transcriptional regulator MraZ (143 aa).

SpoVT-AbrB domains lie at 5-47 (EYQH…PMSE) and 76-119 (ATEC…SKEI).

The protein belongs to the MraZ family. Forms oligomers.

It localises to the cytoplasm. The protein localises to the nucleoid. The chain is Transcriptional regulator MraZ from Bacillus licheniformis (strain ATCC 14580 / DSM 13 / JCM 2505 / CCUG 7422 / NBRC 12200 / NCIMB 9375 / NCTC 10341 / NRRL NRS-1264 / Gibson 46).